The sequence spans 304 residues: UDP-3-O-acyl-N-acetylglucosamine deacetylase (304 aa).

Zn(2+)-binding residues include histidine 77, histidine 233, and aspartate 237. The active-site Proton donor is the histidine 260.

It belongs to the LpxC family. Zn(2+) serves as cofactor.

It carries out the reaction a UDP-3-O-[(3R)-3-hydroxyacyl]-N-acetyl-alpha-D-glucosamine + H2O = a UDP-3-O-[(3R)-3-hydroxyacyl]-alpha-D-glucosamine + acetate. The protein operates within glycolipid biosynthesis; lipid IV(A) biosynthesis; lipid IV(A) from (3R)-3-hydroxytetradecanoyl-[acyl-carrier-protein] and UDP-N-acetyl-alpha-D-glucosamine: step 2/6. Functionally, catalyzes the hydrolysis of UDP-3-O-myristoyl-N-acetylglucosamine to form UDP-3-O-myristoylglucosamine and acetate, the committed step in lipid A biosynthesis. The sequence is that of UDP-3-O-acyl-N-acetylglucosamine deacetylase from Lawsonia intracellularis (strain PHE/MN1-00).